A 467-amino-acid chain; its full sequence is Probable Xaa-Pro aminopeptidase pepP (467 aa).

Residues D264, D275, E398, and E438 each contribute to the Mn(2+) site.

It belongs to the peptidase M24B family. It depends on Mn(2+) as a cofactor.

The catalysed reaction is Release of any N-terminal amino acid, including proline, that is linked to proline, even from a dipeptide or tripeptide.. In terms of biological role, catalyzes the removal of a penultimate prolyl residue from the N-termini of peptides. The sequence is that of Probable Xaa-Pro aminopeptidase pepP (pepP) from Neosartorya fischeri (strain ATCC 1020 / DSM 3700 / CBS 544.65 / FGSC A1164 / JCM 1740 / NRRL 181 / WB 181) (Aspergillus fischerianus).